A 415-amino-acid chain; its full sequence is Transcription termination factor Rho (415 aa).

The Rho RNA-BD domain occupies 52 to 119 (ADIASGVLDI…TDVVRVNGRT (68 aa)). ATP contacts are provided by residues 161-166 (GKGQRG), 173-178 (KTGKTV), and Arg204.

Belongs to the Rho family. In terms of assembly, homohexamer. The homohexamer assembles into an open ring structure.

In terms of biological role, facilitates transcription termination by a mechanism that involves Rho binding to the nascent RNA, activation of Rho's RNA-dependent ATPase activity, and release of the mRNA from the DNA template. This chain is Transcription termination factor Rho, found in Streptomyces coelicolor (strain ATCC BAA-471 / A3(2) / M145).